The following is a 117-amino-acid chain: Large ribosomal subunit protein bL20 (117 aa).

Belongs to the bacterial ribosomal protein bL20 family.

Functionally, binds directly to 23S ribosomal RNA and is necessary for the in vitro assembly process of the 50S ribosomal subunit. It is not involved in the protein synthesizing functions of that subunit. This is Large ribosomal subunit protein bL20 from Natranaerobius thermophilus (strain ATCC BAA-1301 / DSM 18059 / JW/NM-WN-LF).